Here is a 163-residue protein sequence, read N- to C-terminus: Nucleotide-binding protein DvMF_3058 (163 aa).

Belongs to the YajQ family.

Functionally, nucleotide-binding protein. In Nitratidesulfovibrio vulgaris (strain DSM 19637 / Miyazaki F) (Desulfovibrio vulgaris), this protein is Nucleotide-binding protein DvMF_3058.